The sequence spans 421 residues: UDP-N-acetylglucosamine 1-carboxyvinyltransferase 2 (421 aa).

22-23 serves as a coordination point for phosphoenolpyruvate; the sequence is KN. A UDP-N-acetyl-alpha-D-glucosamine-binding site is contributed by Arg-95. Cys-119 (proton donor) is an active-site residue. Cys-119 carries the post-translational modification 2-(S-cysteinyl)pyruvic acid O-phosphothioketal. UDP-N-acetyl-alpha-D-glucosamine is bound by residues 124–128, Asp-308, and Val-330; that span reads RPIEQ.

Belongs to the EPSP synthase family. MurA subfamily.

Its subcellular location is the cytoplasm. It carries out the reaction phosphoenolpyruvate + UDP-N-acetyl-alpha-D-glucosamine = UDP-N-acetyl-3-O-(1-carboxyvinyl)-alpha-D-glucosamine + phosphate. The protein operates within cell wall biogenesis; peptidoglycan biosynthesis. Functionally, cell wall formation. Adds enolpyruvyl to UDP-N-acetylglucosamine. This chain is UDP-N-acetylglucosamine 1-carboxyvinyltransferase 2, found in Staphylococcus haemolyticus (strain JCSC1435).